A 907-amino-acid polypeptide reads, in one-letter code: Envelope glycoprotein B (907 aa).

The first 24 residues, 1 to 24 (MESRIWCLVVCVNLCIVCLGAAVS), serve as a signal peptide directing secretion. The Virion surface segment spans residues 25–751 (SSSTRGTSAT…EGVATFLKNP (727 aa)). The tract at residues 29–62 (RGTSATHSHHSSHTTSAAHSRSGSVSQRVTSSQT) is disordered. A compositionally biased stretch (low complexity) spans 41–62 (HTTSAAHSRSGSVSQRVTSSQT). N-linked (GlcNAc...) asparagine; by host glycosylation is found at N68, N73, and N85. 4 disulfides stabilise this stretch: C94-C551, C111-C507, C185-C250, and C344-C391. The involved in fusion and/or binding to host membrane stretch occupies residues 152–158 (SYAYIHT). N-linked (GlcNAc...) asparagine; by host glycosylation occurs at N208. An involved in fusion and/or binding to host membrane region spans residues 237–244 (GSTWLYRE). 14 N-linked (GlcNAc...) asparagine; by host glycosylation sites follow: N281, N286, N302, N341, N383, N405, N409, N417, N447, N452, N456, N466, N555, and N586. A disulfide bridge connects residues C574 and C611. Residues 697 to 749 (VEDKVVDPLPPYLKGLDDLMSGLGAAGKAVGVAIGAVGGAVASVVEGVATFLK) are hydrophobic membrane proximal region. Residues 752 to 772 (FGAFTIILVAIAVVIITYLIY) traverse the membrane as a helical segment. The Intravirion portion of the chain corresponds to 773-907 (TRQRRLCTQP…LKDSDEEENV (135 aa)). 2 stretches are compositionally biased toward polar residues: residues 798 to 810 (VTSG…SLQA) and 860 to 877 (RAQQ…GTQD). Disordered stretches follow at residues 798-838 (VTSG…TAAP) and 857-907 (AEQR…EENV). Basic and acidic residues predominate over residues 878-887 (KGQKPNLLDR). Residues 895-898 (YRHL) carry the Internalization motif motif.

The protein belongs to the herpesviridae glycoprotein B family. As to quaternary structure, homotrimer; disulfide-linked. Binds to heparan sulfate proteoglycans. Interacts with gH/gL heterodimer. A proteolytic cleavage by host furin generates two subunits that remain linked by disulfide bonds.

The protein resides in the virion membrane. Its subcellular location is the host cell membrane. It is found in the host endosome membrane. The protein localises to the host Golgi apparatus membrane. Functionally, envelope glycoprotein that forms spikes at the surface of virion envelope. Essential for the initial attachment to heparan sulfate moieties of the host cell surface proteoglycans. Involved in fusion of viral and cellular membranes leading to virus entry into the host cell. Following initial binding to its host receptors, membrane fusion is mediated by the fusion machinery composed at least of gB and the heterodimer gH/gL. May be involved in the fusion between the virion envelope and the outer nuclear membrane during virion egress. This chain is Envelope glycoprotein B, found in Human cytomegalovirus (strain Merlin) (HHV-5).